The sequence spans 253 residues: Glutamate racemase (253 aa).

Substrate-binding positions include 7-8 and 39-40; these read DS and YG. Cys-70 serves as the catalytic Proton donor/acceptor. Residue 71–72 participates in substrate binding; that stretch reads NT. Catalysis depends on Cys-180, which acts as the Proton donor/acceptor. 181-182 provides a ligand contact to substrate; that stretch reads TH.

This sequence belongs to the aspartate/glutamate racemases family.

The catalysed reaction is L-glutamate = D-glutamate. It participates in cell wall biogenesis; peptidoglycan biosynthesis. In terms of biological role, provides the (R)-glutamate required for cell wall biosynthesis. The sequence is that of Glutamate racemase from Halothermothrix orenii (strain H 168 / OCM 544 / DSM 9562).